We begin with the raw amino-acid sequence, 511 residues long: Histidine ammonia-lyase (511 aa).

Positions 143–145 (ASG) form a cross-link, 5-imidazolinone (Ala-Gly). Ser-144 is subject to 2,3-didehydroalanine (Ser).

This sequence belongs to the PAL/histidase family. Post-translationally, contains an active site 4-methylidene-imidazol-5-one (MIO), which is formed autocatalytically by cyclization and dehydration of residues Ala-Ser-Gly.

Its subcellular location is the cytoplasm. It catalyses the reaction L-histidine = trans-urocanate + NH4(+). The protein operates within amino-acid degradation; L-histidine degradation into L-glutamate; N-formimidoyl-L-glutamate from L-histidine: step 1/3. The sequence is that of Histidine ammonia-lyase from Vibrio cholerae serotype O1 (strain ATCC 39315 / El Tor Inaba N16961).